Consider the following 109-residue polypeptide: Phosphoribosyl-ATP pyrophosphatase (109 aa).

Belongs to the PRA-PH family.

The protein localises to the cytoplasm. The enzyme catalyses 1-(5-phospho-beta-D-ribosyl)-ATP + H2O = 1-(5-phospho-beta-D-ribosyl)-5'-AMP + diphosphate + H(+). The protein operates within amino-acid biosynthesis; L-histidine biosynthesis; L-histidine from 5-phospho-alpha-D-ribose 1-diphosphate: step 2/9. The sequence is that of Phosphoribosyl-ATP pyrophosphatase from Parvibaculum lavamentivorans (strain DS-1 / DSM 13023 / NCIMB 13966).